The chain runs to 610 residues: E-selectin (610 aa).

The signal sequence occupies residues 1-21; the sequence is MIASQFLSALTLVLLIKESGA. The region spanning 22–138 is the C-type lectin domain; the sequence is WSYSASTTNM…CNKKKLALCY (117 aa). Over 22 to 555 the chain is Extracellular; sequence WSYSASTTNM…CEATAKSNIP (534 aa). A glycan (N-linked (GlcNAc...) asparagine) is linked at asparagine 30. 19 disulfide bridges follow: cysteine 40–cysteine 137, cysteine 110–cysteine 129, cysteine 142–cysteine 153, cysteine 147–cysteine 162, cysteine 164–cysteine 173, cysteine 179–cysteine 223, cysteine 192–cysteine 205, cysteine 209–cysteine 236, cysteine 241–cysteine 285, cysteine 254–cysteine 267, cysteine 271–cysteine 298, cysteine 303–cysteine 348, cysteine 334–cysteine 361, cysteine 366–cysteine 411, cysteine 397–cysteine 424, cysteine 429–cysteine 474, cysteine 460–cysteine 487, cysteine 492–cysteine 533, and cysteine 519–cysteine 546. 3 residues coordinate Ca(2+): glutamate 101, asparagine 103, and glutamate 108. A carbohydrate contacts are provided by residues 101–108, 112–117, and 125–127; these read EPNNKQNE, EIYIKR, and NDE. Residues asparagine 125 and aspartate 126 each coordinate Ca(2+). The 36-residue stretch at 139 to 174 folds into the EGF-like domain; the sequence is TAACTHTSCSGHGECVETINNYTCQCHPGFTGLRCE. Residue asparagine 159 is glycosylated (N-linked (GlcNAc...) asparagine). 6 consecutive Sushi domains span residues 177–238, 239–300, 314–363, 365–426, 428–489, and 490–548; these read VTCQ…ACHV, VECD…TCKA, VNCS…VCKA, QCKA…TCEA, RCDA…SCQV, and VQCA…TCEA. N-linked (GlcNAc...) asparagine glycans are attached at residues asparagine 198 and asparagine 202. An N-linked (GlcNAc...) asparagine glycan is attached at asparagine 264. 3 N-linked (GlcNAc...) asparagine glycosylation sites follow: asparagine 315, asparagine 327, and asparagine 331. N-linked (GlcNAc...) asparagine glycosylation is present at asparagine 526. Residues 556–577 traverse the membrane as a helical segment; the sequence is LTVGLSAAGTSLLTLASFLFWL. Over 578–610 the chain is Cytoplasmic; sequence LKRLRRKAKKFVPASSYQSLQSDGSYQMPSESA.

It belongs to the selectin/LECAM family. Interacts with SELPLG/PSGL1 and PODXL2 through the sialyl Lewis X epitope. SELPLG sulfation appears not to be required for this interaction.

It localises to the cell membrane. Cell-surface glycoprotein having a role in immunoadhesion. Mediates in the adhesion of blood neutrophils in cytokine-activated endothelium through interaction with SELPLG/PSGL1. May have a role in capillary morphogenesis. The chain is E-selectin (SELE) from Equus caballus (Horse).